Here is an 87-residue protein sequence, read N- to C-terminus: uncharacterized protein (87 aa).

The signal sequence occupies residues 1 to 25 (MKIRKILLSSALSFGMLISAVPALA).

This is an uncharacterized protein from Bacillus subtilis (strain 168).